Here is a 50-residue protein sequence, read N- to C-terminus: MKVTCVLVLTLMALTVCQVATAYCINVGMCIYDGYCCSNRCWGGMCSPWR.

An N-terminal signal peptide occupies residues 1 to 22 (MKVTCVLVLTLMALTVCQVATA). Disulfide bonds link Cys24/Cys37, Cys30/Cys41, and Cys36/Cys46.

As to expression, expressed by the venom duct.

The protein resides in the secreted. Probable neurotoxin. This Californiconus californicus (California cone) protein is Conotoxin Cal6.19.